The sequence spans 284 residues: Insulin-like growth factor-binding protein 2 (284 aa).

A signal peptide spans 1–21; sequence MGLSRYLLGLLLGVLCTPAPA. The IGFBP N-terminal domain maps to 23–106; the sequence is VLFRCPPCSP…VLGLGTCGKR (84 aa). 6 cysteine pairs are disulfide-bonded: Cys-27–Cys-56, Cys-30–Cys-58, Cys-38–Cys-59, Cys-47–Cys-62, Cys-70–Cys-83, and Cys-77–Cys-103. The tract at residues 108–184 is disordered; sequence DTEYGSSQER…KSEDKKRPAR (77 aa). Positions 117 to 127 are enriched in basic and acidic residues; it reads RGTELPEERSD. Over residues 136 to 145 the composition is skewed to low complexity; that stretch reads EAGPAVAGEA. Over residues 152-180 the composition is skewed to basic and acidic residues; the sequence is KKEMKEIAVTRERANEQQRSKSNKSEDKK. Positions 184 to 266 constitute a Thyroglobulin type-1 domain; sequence RSLCQLQLDQ…SPTIRGDPEC (83 aa). Intrachain disulfides connect Cys-187–Cys-221, Cys-232–Cys-243, and Cys-245–Cys-266. The short motif at 261–263 is the Cell attachment site element; it reads RGD.

In terms of assembly, interacts with igf1 and igf2.

It is found in the secreted. Functionally, IGF-binding proteins prolong the half-life of the IGFs and have been shown to either inhibit or stimulate the growth promoting effects of the IGFs on cell culture. They alter the interaction of IGFs with their cell surface receptors. The sequence is that of Insulin-like growth factor-binding protein 2 from Xenopus tropicalis (Western clawed frog).